A 217-amino-acid polypeptide reads, in one-letter code: Probable GTP-binding protein EngB (217 aa).

Residues 37–214 (AGIEVAFAGR…RAAMIRLLDE (178 aa)) form the EngB-type G domain. GTP is bound by residues 45 to 52 (GRSNVGKS), 72 to 76 (GRTQE), 92 to 95 (DMPG), 159 to 162 (TKAD), and 193 to 195 (TSS). Positions 52 and 74 each coordinate Mg(2+).

This sequence belongs to the TRAFAC class TrmE-Era-EngA-EngB-Septin-like GTPase superfamily. EngB GTPase family. The cofactor is Mg(2+).

Necessary for normal cell division and for the maintenance of normal septation. The sequence is that of Probable GTP-binding protein EngB from Rhodopseudomonas palustris (strain BisB5).